We begin with the raw amino-acid sequence, 2489 residues long: Protein YPR117W (2489 aa).

The next 2 helical transmembrane spans lie at F19–M39 and V128–T148. 15 N-linked (GlcNAc...) asparagine glycosylation sites follow: N191, N210, N311, N452, N468, N605, N638, N663, N698, N789, N835, N981, N1255, N1404, and N1476. Residues L1610 to S1676 adopt a coiled-coil conformation. The interval P1685 to L1704 is disordered. The span at D1690–L1704 shows a compositional bias: low complexity. 2 N-linked (GlcNAc...) asparagine glycosylation sites follow: N1978 and N2189. Residues S2254 and S2278 each carry the phosphoserine modification. N2279 is a glycosylation site (N-linked (GlcNAc...) asparagine). The span at S2451–D2471 shows a compositional bias: polar residues. The tract at residues S2451–K2489 is disordered.

Its subcellular location is the cell membrane. The protein localises to the endoplasmic reticulum membrane. The protein resides in the mitochondrion membrane. Its function is as follows. Tube-forming lipid transport protein which may bind to phosphatidylinositols and may affect phosphatidylinositol-4,5-bisphosphate (PtdIns-4,5-P2) distribution. This chain is Protein YPR117W, found in Saccharomyces cerevisiae (strain ATCC 204508 / S288c) (Baker's yeast).